A 776-amino-acid polypeptide reads, in one-letter code: Mitochondrial intermediate peptidase (776 aa).

The N-terminal 28 residues, 1–28 (MRRFSTLSRRLQRVVPASSASTANTSPS), are a transit peptide targeting the mitochondrion. Residue His561 coordinates Zn(2+). Glu562 is a catalytic residue. Zn(2+) contacts are provided by His565 and His568.

This sequence belongs to the peptidase M3 family. Requires Zn(2+) as cofactor.

Its subcellular location is the mitochondrion matrix. The catalysed reaction is Release of an N-terminal octapeptide as second stage of processing of some proteins imported into the mitochondrion.. Its function is as follows. Cleaves proteins, imported into the mitochondrion, to their mature size. While most mitochondrial precursor proteins are processed to the mature form in one step by mitochondrial processing peptidase (MPP), the sequential cleavage by MIP of an octapeptide after initial processing by MPP is a required step for a subgroup of nuclear-encoded precursor proteins destined for the matrix or the inner membrane. The polypeptide is Mitochondrial intermediate peptidase (OCT1) (Yarrowia lipolytica (strain CLIB 122 / E 150) (Yeast)).